A 188-amino-acid polypeptide reads, in one-letter code: Large ribosomal subunit protein eL18 (188 aa).

A disordered region spans residues 153-188 (GKAPGTPHSHTKPYIRSKGRKFERARGRRASRGYKN). 2 stretches are compositionally biased toward basic residues: residues 161–171 (SHTKPYIRSKG) and 178–188 (RGRRASRGYKN).

The protein belongs to the eukaryotic ribosomal protein eL18 family. Component of the large ribosomal subunit.

The protein localises to the cytoplasm. It is found in the cytosol. Its subcellular location is the rough endoplasmic reticulum. In terms of biological role, component of the large ribosomal subunit. The ribosome is a large ribonucleoprotein complex responsible for the synthesis of proteins in the cell. This Ictalurus punctatus (Channel catfish) protein is Large ribosomal subunit protein eL18 (rpl18).